The chain runs to 257 residues: Snake venom serine protease KN3 (257 aa).

An N-terminal signal peptide occupies residues 1 to 18 (MVLIRVLANLLILQLSYA). The propeptide occupies 19–24 (QKSSKL). Residues 25–248 (VVGGDECNIN…HLDWIKSIIA (224 aa)) form the Peptidase S1 domain. 6 disulfide bridges follow: Cys31–Cys162, Cys49–Cys65, Cys97–Cys255, Cys141–Cys209, Cys173–Cys188, and Cys199–Cys224. Catalysis depends on charge relay system residues His64 and Asp109. Residues Asn120, Asn121, and Asn164 are each glycosylated (N-linked (GlcNAc...) asparagine). Catalysis depends on Ser203, which acts as the Charge relay system.

The protein belongs to the peptidase S1 family. Snake venom subfamily. As to quaternary structure, monomer. As to expression, expressed by the venom gland.

The protein resides in the secreted. Snake venom serine protease that may act in the hemostasis system of the prey. The protein is Snake venom serine protease KN3 of Trimeresurus stejnegeri (Chinese green tree viper).